Reading from the N-terminus, the 618-residue chain is Nuclear RNA export factor 1 (618 aa).

Basic and acidic residues predominate over residues Met-1–Val-15. A disordered region spans residues Met-1–Gly-113. An N-acetylalanine modification is found at Ala-2. Residues Ala-2 to Ala-59 form a minor non-specific RNA-binding region. Residues Ala-2–Asn-117 form an RNA-binding (RBD) region. The segment at Ala-2–Tyr-197 is interaction with ALYREF/THOC4 and LUZP4. Basic residues predominate over residues Gln-19 to Phe-28. The residue at position 41 (Arg-41) is an Asymmetric dimethylarginine; alternate. Residue Arg-41 is modified to Omega-N-methylarginine; alternate. The major non-specific RNA-binding stretch occupies residues Met-60–Asn-117. The interval Met-60–Asn-117 is RNA binding. A Nuclear localization signal motif is present at residues Gly-66–Arg-99. Basic and acidic residues predominate over residues Arg-81–Gln-102. The Nuclear export signal signature appears at Arg-82–Thr-109. Residues Trp-118 to Tyr-197 form the RRM domain. At Tyr-125 the chain carries 3'-nitrotyrosine. 4 LRR repeats span residues Glu-265–Pro-290, Asn-291–Leu-314, Lys-315–Glu-342, and Arg-343–Pro-370. The NTF2 domain maps to Leu-385–Val-535. Positions Gln-564–Lys-618 constitute a TAP-C domain.

Belongs to the NXF family. As to quaternary structure, heterodimer (via NTF2 domain) with NXT1. The formation of NXF1-NXT1 heterodimers is required for the NXF1-mediated nuclear mRNA export. Forms a complex with RANBP2/NUP358, NXT1 and RANGAP1. Associates with the exon junction complex (EJC). Associates with the transcription/export (TREX) complex. Found in a mRNA complex with UPF3A and UPF3B. Found in a post-splicing complex with RBM8A, UPF1, UPF2, UPF3A, UPF3B and RNPS1. Interacts (via N-terminus) with DHX9 (via N-terminus); this interaction is direct and negatively regulates NXF1-mediated nuclear export of constitutive transport element (CTE)-containing cellular mRNAs. Interacts with FYTTD1/UIF. Interacts with EIF4A3. Interacts with NUP42. Interacts with ALYREF/THOC4. Interacts with CHTOP. Interacts with FRG1 (via N-terminus). Interacts with LUZP4. Interacts with FMR1; the interaction occurs in a mRNA-dependent and polyribosomes-independent manner in the nucleus. Interacts with CPSF6 (via N-terminus); this interaction is direct. Interacts with RBM15. Interacts with RBM15B. Interacts with MCM3AP; this interaction is not mediated by RNA. Interacts with DDX3X (via C-terminus); this interaction may be partly involved in DDX3X nuclear export and in NXF1 localization to stress granules. Interacts with PABPC1/PABP1.

It is found in the nucleus. The protein localises to the nucleoplasm. It localises to the nucleus speckle. Its subcellular location is the nuclear pore complex. The protein resides in the nucleus envelope. It is found in the cytoplasm. The protein localises to the stress granule. Its function is as follows. Involved in the nuclear export of mRNA species bearing retroviral constitutive transport elements (CTE) and in the export of mRNA from the nucleus to the cytoplasm (TAP/NFX1 pathway). The NXF1-NXT1 heterodimer is involved in the export of HSP70 mRNA in conjunction with ALYREF/THOC4 and THOC5 components of the TREX complex. ALYREF/THOC4-bound mRNA is thought to be transferred to the NXF1-NXT1 heterodimer for export. Also involved in nuclear export of m6A-containing mRNAs: interaction between SRSF3 and YTHDC1 facilitates m6A-containing mRNA-binding to both SRSF3 and NXF1, promoting mRNA nuclear export. In Rattus norvegicus (Rat), this protein is Nuclear RNA export factor 1 (Nxf1).